The following is a 445-amino-acid chain: Phosphoglucosamine mutase (445 aa).

S102 (phosphoserine intermediate) is an active-site residue. The Mg(2+) site is built by S102, D241, D243, and D245. A Phosphoserine modification is found at S102.

It belongs to the phosphohexose mutase family. The cofactor is Mg(2+). Activated by phosphorylation.

The enzyme catalyses alpha-D-glucosamine 1-phosphate = D-glucosamine 6-phosphate. Functionally, catalyzes the conversion of glucosamine-6-phosphate to glucosamine-1-phosphate. In Shewanella piezotolerans (strain WP3 / JCM 13877), this protein is Phosphoglucosamine mutase.